A 1003-amino-acid chain; its full sequence is DNA topoisomerase 3-alpha (1003 aa).

In terms of domain architecture, Toprim spans 35–179; the sequence is KVLCVAEKND…NLRVLRARFS (145 aa). One can recognise a Topo IA-type catalytic domain in the interval 197-617; it reads DQRVSDAVDV…QQVQKYKQVF (421 aa). Y362 serves as the catalytic O-(5'-phospho-DNA)-tyrosine intermediate. Positions 400–426 are disordered; sequence GGPTPRNGSKSDQAHPPIHPTKYTSGL. The segment at 658 to 685 adopts a C4-type zinc-finger fold; that stretch reads CPQCNKDMVLKTKKSGGFYLSCMGFPEC. Zn(2+) is bound by residues C815, C817, C840, and C845. The segment at 815–854 adopts a GRF-type 1 zinc-finger fold; the sequence is CNCGREAVLLTVRKQGPNQGRHFYKCSNGDCNFFLWADSS. Residues 856–888 form a disordered region; that stretch reads STGGGTPTSASGPPGSSVGCPSSVGSHMDGFGS. The segment covering 862–888 has biased composition (low complexity); sequence PTSASGPPGSSVGCPSSVGSHMDGFGS. Positions 899, 901, 924, and 932 each coordinate Zn(2+). The segment at 899–941 adopts a GRF-type 2 zinc-finger fold; it reads CLCGQPAVTRTVQKDGPNKGRQFHTCAKPREQQCGFFQWVDEN. Positions 946–991 are disordered; it reads SFAAPAWPGGRGKAQRPEAASKRPRAGSSDAGSTVKKPRKCSLCHQ.

It belongs to the type IA topoisomerase family. Binds ssDNA. Interacts (via N-terminal region) with BLM; the interaction is direct. Directly interacts with RMI1. Component of the RMI complex, containing at least TOP3A, RMI1 and RMI2. The RMI complex interacts with BLM. Mg(2+) is required as a cofactor. In terms of tissue distribution, highly expressed in testis.

The protein resides in the mitochondrion matrix. It carries out the reaction ATP-independent breakage of single-stranded DNA, followed by passage and rejoining.. Its function is as follows. Releases the supercoiling and torsional tension of DNA introduced during the DNA replication and transcription by transiently cleaving and rejoining one strand of the DNA duplex. Introduces a single-strand break via transesterification at a target site in duplex DNA. The scissile phosphodiester is attacked by the catalytic tyrosine of the enzyme, resulting in the formation of a DNA-(5'-phosphotyrosyl)-enzyme intermediate and the expulsion of a 3'-OH DNA strand. The free DNA strand then undergoes passage around the unbroken strand thus removing DNA supercoils. Finally, in the religation step, the DNA 3'-OH attacks the covalent intermediate to expel the active-site tyrosine and restore the DNA phosphodiester backbone. As an essential component of the RMI complex it is involved in chromosome separation and the processing of homologous recombination intermediates to limit DNA crossover formation in cells. Has DNA decatenation activity. It is required for mtDNA decatenation and segregation after completion of replication, in a process that does not require BLM, RMI1 and RMI2. This is DNA topoisomerase 3-alpha (Top3a) from Mus musculus (Mouse).